The primary structure comprises 928 residues: Nuclear pore complex-interacting protein family member B12 (928 aa).

The chain crosses the membrane as a helical span at residues 73-93 (VVITLWIVYLWVSLLKTIFWS). 2 disordered regions span residues 242 to 452 (RMGH…NIKT) and 663 to 928 (ERLR…RRLS). Residues 252-263 (QQHSITDNSLSL) are compositionally biased toward polar residues. The segment covering 349–359 (PLPPSAPPSAP) has biased composition (pro residues). Composition is skewed to basic and acidic residues over residues 406–416 (DNIKTPAERLR), 698–708 (DNIKTPAERLR), 740–750 (DNIKTPAERLR), and 782–792 (DNIKTPAERLR).

This sequence belongs to the NPIP family.

It localises to the membrane. The chain is Nuclear pore complex-interacting protein family member B12 from Homo sapiens (Human).